The primary structure comprises 307 residues: Ribosomal RNA small subunit methyltransferase H (307 aa).

Residues 32 to 34 (GGH), Asp-52, Phe-78, Asp-100, and Gln-107 each bind S-adenosyl-L-methionine.

This sequence belongs to the methyltransferase superfamily. RsmH family.

It is found in the cytoplasm. It carries out the reaction cytidine(1402) in 16S rRNA + S-adenosyl-L-methionine = N(4)-methylcytidine(1402) in 16S rRNA + S-adenosyl-L-homocysteine + H(+). In terms of biological role, specifically methylates the N4 position of cytidine in position 1402 (C1402) of 16S rRNA. This chain is Ribosomal RNA small subunit methyltransferase H, found in Coxiella burnetii (strain CbuK_Q154) (Coxiella burnetii (strain Q154)).